Here is a 310-residue protein sequence, read N- to C-terminus: Aspartate carbamoyltransferase catalytic subunit (310 aa).

Positions 58 and 59 each coordinate carbamoyl phosphate. An L-aspartate-binding site is contributed by Lys-86. Carbamoyl phosphate-binding residues include Arg-108, His-137, and Gln-140. Residues Arg-170 and Arg-225 each coordinate L-aspartate. Carbamoyl phosphate contacts are provided by Gly-264 and Pro-265.

The protein belongs to the aspartate/ornithine carbamoyltransferase superfamily. ATCase family. In terms of assembly, heterododecamer (2C3:3R2) of six catalytic PyrB chains organized as two trimers (C3), and six regulatory PyrI chains organized as three dimers (R2).

The catalysed reaction is carbamoyl phosphate + L-aspartate = N-carbamoyl-L-aspartate + phosphate + H(+). It functions in the pathway pyrimidine metabolism; UMP biosynthesis via de novo pathway; (S)-dihydroorotate from bicarbonate: step 2/3. Its function is as follows. Catalyzes the condensation of carbamoyl phosphate and aspartate to form carbamoyl aspartate and inorganic phosphate, the committed step in the de novo pyrimidine nucleotide biosynthesis pathway. The polypeptide is Aspartate carbamoyltransferase catalytic subunit (Coxiella burnetii (strain CbuK_Q154) (Coxiella burnetii (strain Q154))).